The primary structure comprises 312 residues: Ribosomal RNA small subunit methyltransferase H (312 aa).

Residues 36-38 (GGH), D55, F81, D103, and Q110 each bind S-adenosyl-L-methionine.

The protein belongs to the methyltransferase superfamily. RsmH family.

The protein resides in the cytoplasm. The enzyme catalyses cytidine(1402) in 16S rRNA + S-adenosyl-L-methionine = N(4)-methylcytidine(1402) in 16S rRNA + S-adenosyl-L-homocysteine + H(+). Specifically methylates the N4 position of cytidine in position 1402 (C1402) of 16S rRNA. The sequence is that of Ribosomal RNA small subunit methyltransferase H from Marinomonas sp. (strain MWYL1).